A 330-amino-acid polypeptide reads, in one-letter code: Cytosolic iron-sulfur protein assembly protein 1 (330 aa).

WD repeat units follow at residues 12-53 (LYKE…DVLD), 56-95 (AHKK…DRTF), 105-144 (GHEN…EEYE), 151-190 (EHSQ…WECV), 195-236 (GHEG…EDDQ), 248-286 (VHKR…WKVF), and 292-330 (CHGV…EKAA).

Belongs to the WD repeat CIA1 family. Interacts with NAR1.

The protein resides in the cytoplasm. It localises to the nucleus. Essential component of the cytosolic iron-sulfur (Fe/S) protein assembly machinery. Required for the maturation of extramitochondrial Fe/S proteins. In Saccharomyces cerevisiae (strain ATCC 204508 / S288c) (Baker's yeast), this protein is Cytosolic iron-sulfur protein assembly protein 1.